The sequence spans 241 residues: MAEEQPQVELFVKAGSDGAKIGNCPFSQRLFMVLWLKGVTFNVTTVDTKRRTETVQKLCPGGQLPFLLYGTEVHTDTNKIEEFLEAVLCPPRYPKLAALNPESNTSGLDIFAKFSAYIKNSNPALNDNLEKGLLKALKVLDNYLTSPLPEEVDETSAEDEGISQRKFLDGNELTLADCNLLPKLHIVQVVCKKYRGFTIPEAFRGVHRYLSNAYAREEFASTCPDDEEIELAYEQVARALK.

Ala2 carries the post-translational modification N-acetylalanine. Residues 2-90 (AEEQPQVELF…EEFLEAVLCP (89 aa)) form a required for insertion into the membrane region. Lys13 bears the N6-acetyllysine mark. The G-site motif lies at 24 to 27 (CPFS). Cys24 and Cys59 are disulfide-bonded. The chain crosses the membrane as a helical span at residues 26-46 (FSQRLFMVLWLKGVTFNVTTV). The region spanning 93-233 (YPKLAALNPE…PDDEEIELAY (141 aa)) is the GST C-terminal domain. Lys119 carries the N6-acetyllysine modification. The residue at position 121 (Ser121) is a Phosphoserine. The residue at position 131 (Lys131) is an N6-acetyllysine. Residues Ser156 and Ser211 each carry the phosphoserine modification. Tyr233 bears the Phosphotyrosine mark.

The protein belongs to the chloride channel CLIC family. As to quaternary structure, monomer. Homodimer (in vitro). Interacts with TRAPPC2. Dimerization requires a conformation change that leads to the exposure of a large hydrophobic surface. In vivo, this may lead to membrane insertion. Expressed in neonatal and adult cardiomyocytes (at protein level).

It localises to the nucleus. The protein localises to the nucleus membrane. The protein resides in the cytoplasm. It is found in the cell membrane. Its subcellular location is the endoplasmic reticulum. It catalyses the reaction L-dehydroascorbate + 2 glutathione = glutathione disulfide + L-ascorbate. The enzyme catalyses chloride(in) = chloride(out). The catalysed reaction is iodide(out) = iodide(in). It carries out the reaction thiocyanate(in) = thiocyanate(out). It catalyses the reaction nitrate(in) = nitrate(out). The enzyme catalyses bromide(in) = bromide(out). The catalysed reaction is fluoride(in) = fluoride(out). Its function is as follows. In the soluble state, catalyzes glutaredoxin-like thiol disulfide exchange reactions with reduced glutathione as electron donor. Reduces selenite and dehydroascorbate and may act as an antioxidant during oxidative stress response. Can insert into membranes and form voltage-dependent multi-ion conductive channels. Membrane insertion seems to be redox-regulated and may occur only under oxidizing conditions. Involved in regulation of the cell cycle. The protein is Chloride intracellular channel protein 1 of Rattus norvegicus (Rat).